Here is a 303-residue protein sequence, read N- to C-terminus: Cell wall mannoprotein HSP150 (303 aa).

A signal peptide spans 1-18 (MQYKKTLVASALAATTLA). Residues 19 to 72 (AYAPSEPWSTLTPTATYSGGVTDYASTFGIAVQPISTTSSASSAATTASSKAKR) constitute a propeptide that is removed on maturation. PIR1/2/3 repeat units follow at residues 71–89 (KRAASQIGDGQVQAATTTA) and 97–113 (AAAVSQIGDGQIQATTK). The PIR1/2/3 3; degenerate repeat unit spans residues 114–134 (TTAAASLKLVMVKIQATTKTT). 3 PIR1/2/3 repeats span residues 135 to 153 (AAAVSQIGDGQVQATTKTT), 154 to 171 (AAAVSQITDGQVQATTKT), and 172 to 190 (TQAASQVSDGQVQATSATS).

The protein belongs to the PIR protein family. In terms of processing, covalently linked to beta-1,3-glucan of the inner cell wall layer via an alkali-sensitive ester linkage between the gamma-carboxyl group of glutamic acids, arising from specific glutamines within the PIR1/2/3 repeats, and hydroxyl groups of glucoses of beta-1,3-glucan chains. The propeptide is cleaved off in the late Golgi. While both peptides are secreted, only a fraction of the mature glycoprotein is incorporated into the cell wall. Post-translationally, O-glycosylated. Extensively O-mannosylated.

It is found in the secreted. The protein localises to the cell wall. Component of the outer cell wall layer. Required for stability of the cell wall and for optimal growth. Required for resistance against several antifungal and cell wall-perturbing agents and for tolerance to heat shock. This Saccharomyces cerevisiae (strain AWRI1631) (Baker's yeast) protein is Cell wall mannoprotein HSP150 (HSP150).